The primary structure comprises 68 residues: MAKTKNVRVTVILECTSCAQNNVNVNKVATGISRYITQKNRHNTPNRLEFKKFCPRCYKHTLHGEIKK.

The protein belongs to the bacterial ribosomal protein bL33 family.

The protein localises to the plastid. The polypeptide is Large ribosomal subunit protein bL33c (Cuscuta reflexa (Southern Asian dodder)).